We begin with the raw amino-acid sequence, 125 residues long: Photosystem II extrinsic protein U (125 aa).

Residues 1–29 (MKRLLSWLTGLVVIAGLLIGLLVPPSVSA) form the signal peptide.

This sequence belongs to the PsbU family. In terms of assembly, PSII is composed of 1 copy each of membrane proteins PsbA, PsbB, PsbC, PsbD, PsbE, PsbF, PsbH, PsbI, PsbJ, PsbK, PsbL, PsbM, PsbT, PsbX, PsbY, PsbZ, Psb30/Ycf12, peripheral proteins PsbO, CyanoQ (PsbQ), PsbU, PsbV and a large number of cofactors. It forms dimeric complexes.

The protein localises to the cellular thylakoid membrane. In terms of biological role, one of the extrinsic, lumenal subunits of photosystem II (PSII). PSII is a light-driven water plastoquinone oxidoreductase, using light energy to abstract electrons from H(2)O, generating a proton gradient subsequently used for ATP formation. The extrinsic proteins stabilize the structure of photosystem II oxygen-evolving complex (OEC), the ion environment of oxygen evolution and protect the OEC against heat-induced inactivation. This Synechococcus sp. (strain CC9311) protein is Photosystem II extrinsic protein U.